The sequence spans 289 residues: Ribosomal protein L11 methyltransferase (289 aa).

S-adenosyl-L-methionine-binding residues include Thr142, Gly163, Asp185, and Asn226.

Belongs to the methyltransferase superfamily. PrmA family.

The protein resides in the cytoplasm. It catalyses the reaction L-lysyl-[protein] + 3 S-adenosyl-L-methionine = N(6),N(6),N(6)-trimethyl-L-lysyl-[protein] + 3 S-adenosyl-L-homocysteine + 3 H(+). Functionally, methylates ribosomal protein L11. The polypeptide is Ribosomal protein L11 methyltransferase (Legionella pneumophila (strain Corby)).